The primary structure comprises 531 residues: RCC1 and BTB domain-containing protein 1 (531 aa).

6 RCC1 repeats span residues 40–91 (NDEV…LLST), 93–145 (DGVV…ALAA), 147–198 (GEVF…AVLD), 199–250 (NGEV…ALTD), 252–302 (GLLY…AAKT), and 304–356 (GGHV…FLTV). BTB domains lie at 370 to 437 (ADLK…DLPP) and 470 to 499 (ENAF…INHL).

Ubiquitously expressed. In the retina, present in the nerve fiber layer and to a lesser extent in the inner and outer plexiform layers (at protein level).

It localises to the nucleus. Functionally, may be involved in cell cycle regulation by chromatin remodeling. The polypeptide is RCC1 and BTB domain-containing protein 1 (RCBTB1) (Homo sapiens (Human)).